A 291-amino-acid polypeptide reads, in one-letter code: Oxidative stress-responsive serine-rich protein 1 (291 aa).

The disordered stretch occupies residues 48–174 (EDAKPKSACA…SSDAPQVSQA (127 aa)). Basic residues predominate over residues 65 to 83 (STRKSSRGAVRTQRRRRSK). Positions 132–142 (ECSSSLDTNHT) are enriched in polar residues. 2 positions are modified to phosphothreonine: threonine 142 and threonine 232.

The polypeptide is Oxidative stress-responsive serine-rich protein 1 (OSER1) (Bos taurus (Bovine)).